Here is a 169-residue protein sequence, read N- to C-terminus: Cytochrome c-type biogenesis protein CcmE (169 aa).

Topologically, residues 1-7 (MTRKSRR) are cytoplasmic. The chain crosses the membrane as a helical; Signal-anchor for type II membrane protein span at residues 8–28 (LILIAACGAVLALALGLILSA). Residues 29–169 (MSGSIVFFRS…DATLGQRSER (141 aa)) lie on the Periplasmic side of the membrane. Heme is bound by residues His122 and Tyr126. Residues 135 to 169 (LKAQGRWQEGGGKEAPKDAAKPASADATLGQRSER) are disordered. Positions 145–154 (GGKEAPKDAA) are enriched in basic and acidic residues.

It belongs to the CcmE/CycJ family.

The protein resides in the cell inner membrane. Functionally, heme chaperone required for the biogenesis of c-type cytochromes. Transiently binds heme delivered by CcmC and transfers the heme to apo-cytochromes in a process facilitated by CcmF and CcmH. The sequence is that of Cytochrome c-type biogenesis protein CcmE from Methylorubrum populi (strain ATCC BAA-705 / NCIMB 13946 / BJ001) (Methylobacterium populi).